The sequence spans 601 residues: ATP-dependent lipid A-core flippase (601 aa).

Helical transmembrane passes span 27–47, 83–103, 174–194, and 267–287; these read IGLFLISIVGFLIFASTQPML, LLIVLIAAWQGLGSYLGNYFL, LLWMNWRLTLVMIAILPLIAV, and PLLQLVIYSAMAVLMFLVLYL. The ABC transmembrane type-1 domain occupies 31–322; sequence LISIVGFLIF…LSEVSSTIQK (292 aa). One can recognise an ABC transporter domain in the interval 354-590; sequence LEVRNLSFTY…NGYYSRLHAM (237 aa). Residue 388–395 participates in ATP binding; the sequence is GRSGSGKS.

Belongs to the ABC transporter superfamily. Lipid exporter (TC 3.A.1.106) family. As to quaternary structure, homodimer.

It is found in the cell inner membrane. The catalysed reaction is ATP + H2O + lipid A-core oligosaccharideSide 1 = ADP + phosphate + lipid A-core oligosaccharideSide 2.. Its function is as follows. Involved in lipopolysaccharide (LPS) biosynthesis. Translocates lipid A-core from the inner to the outer leaflet of the inner membrane. Transmembrane domains (TMD) form a pore in the inner membrane and the ATP-binding domain (NBD) is responsible for energy generation. This is ATP-dependent lipid A-core flippase from Pseudomonas fluorescens (strain ATCC BAA-477 / NRRL B-23932 / Pf-5).